We begin with the raw amino-acid sequence, 49 residues long: Large ribosomal subunit protein bL33B (49 aa).

Belongs to the bacterial ribosomal protein bL33 family.

The protein is Large ribosomal subunit protein bL33B of Acholeplasma laidlawii (strain PG-8A).